Consider the following 1439-residue polypeptide: Histone-lysine N-methyltransferase NSD3 (1439 aa).

Residues 121–151 (PHEILEKPSPPQPPPPPSVPQTVIPKKTGSP) are disordered. Over residues 128-139 (PSPPQPPPPPSV) the composition is skewed to pro residues. A Phosphoserine modification is found at serine 150. The KIKL motif lies at 154–157 (KLKI). The segment at 181 to 247 (QASEHTKSKH…PREEPVLKEA (67 aa)) is disordered. A compositionally biased stretch (basic residues) spans 187–201 (KSKHESRKEKRKKSN). Over residues 202–244 (RHESSRSEERRSHKIPKLEPEGQNRPNERVDTAPEKPREEPVL) the composition is skewed to basic and acidic residues. Residues lysine 218 and lysine 245 each participate in a glycyl lysine isopeptide (Lys-Gly) (interchain with G-Cter in SUMO2) cross-link. Residues 270–333 (VGDLVWSKVG…EKRVREYKGH (64 aa)) enclose the PWWP 1 domain. Disordered stretches follow at residues 344-367 (AKQASNHSEKQKIRKPRPQRERAQ) and 401-466 (EASS…PPPV). 2 stretches are compositionally biased toward polar residues: residues 401-413 (EASSQAKKNVTSK) and 425-445 (VLNSQPEQTNAGEVASSQSST). A Glycyl lysine isopeptide (Lys-Gly) (interchain with G-Cter in SUMO2) cross-link involves residue lysine 413. At serine 457 the chain carries Phosphoserine. Residues lysine 502 and lysine 532 each participate in a glycyl lysine isopeptide (Lys-Gly) (interchain with G-Cter in SUMO2) cross-link. Residues 540-695 (QDRLIISSPS…VDSSLSRRGV (156 aa)) are disordered. A compositionally biased stretch (polar residues) spans 546–568 (SSPSQRSEKPAQSASSPEATSGS). Residues 583–595 (TRSESEKSAEVVP) show a composition bias toward basic and acidic residues. Residues serine 585, serine 587, and serine 590 each carry the phosphoserine modification. A Glycyl lysine isopeptide (Lys-Gly) (interchain with G-Cter in SUMO2) cross-link involves residue lysine 628. The span at 637–648 (STDVETASCTYR) shows a compositional bias: polar residues. Serine 655 carries the phosphoserine modification. Over residues 670 to 691 (DSPSATADADASDAQSVDSSLS) the composition is skewed to low complexity. 3 PHD-type zinc fingers span residues 701–748 (DTVC…CETG), 749–805 (QHPC…CSME), and 862–955 (VGFC…CKAG). An N6-acetyllysine modification is found at lysine 790. In terms of domain architecture, PWWP 2 spans 960-1025 (YKQIVWVKLG…QGRVFPYVEG (66 aa)). Residues 1036–1065 (INKTFKKALEEAAKRFQELKAQRESKEALE) adopt a coiled-coil conformation. The 51-residue stretch at 1096 to 1146 (SEIPRCNCKPGDENPCGLESQCLNRMSQYECHPQVCPAGDRCQNQCFTKRL) folds into the AWS domain. The SET domain occupies 1148–1265 (PDAEVIKTER…AGMELTFNYN (118 aa)). A Glycyl lysine isopeptide (Lys-Gly) (interchain with G-Cter in SUMO2) cross-link involves residue lysine 1154. The Post-SET domain occupies 1272–1288 (GRTVCHCGADNCSGFLG). A PHD-type 4; atypical zinc finger spans residues 1323-1370 (EDYCFQCGDGGELVMCDKKDCPKAYHLLCLNLTQPPHGKWECPWHRCD).

This sequence belongs to the class V-like SAM-binding methyltransferase superfamily. Histone-lysine methyltransferase family. SET2 subfamily. As to quaternary structure, interacts with BRD4. Interacts (via KIKL motif) with BRD3 (via NET domain).

Its subcellular location is the nucleus. It localises to the chromosome. The enzyme catalyses L-lysyl(4)-[histone H3] + 2 S-adenosyl-L-methionine = N(6),N(6)-dimethyl-L-lysyl(4)-[histone H3] + 2 S-adenosyl-L-homocysteine + 2 H(+). The catalysed reaction is L-lysyl(27)-[histone H3] + 2 S-adenosyl-L-methionine = N(6),N(6)-dimethyl-L-lysyl(27)-[histone H3] + 2 S-adenosyl-L-homocysteine + 2 H(+). Histone methyltransferase. Preferentially dimethylates 'Lys-4' and 'Lys-27' of histone H3 forming H3K4me2 and H3K27me2. H3 'Lys-4' methylation represents a specific tag for epigenetic transcriptional activation, while 'Lys-27' is a mark for transcriptional repression. The chain is Histone-lysine N-methyltransferase NSD3 (Nsd3) from Mus musculus (Mouse).